Here is a 335-residue protein sequence, read N- to C-terminus: Mitochondrial carrier protein CoAc2 (335 aa).

6 helical membrane-spanning segments follow: residues 12–32 (SGPG…AGGV), 75–95 (FYRG…LHYM), 119–139 (LVAG…LDLV), 187–207 (GMAP…YFYE), 225–242 (LGCG…TYPL), and 280–302 (LFSG…FTVY). 3 Solcar repeats span residues 17–103 (PLAV…YRRW), 113–212 (QGPV…MKSH), and 219–308 (KGII…MKVC).

Belongs to the mitochondrial carrier (TC 2.A.29) family. In terms of tissue distribution, expressed throughout the plant.

It is found in the mitochondrion inner membrane. Required for the accumulation of coenzyme A in the mitochondrial matrix. The protein is Mitochondrial carrier protein CoAc2 of Zea mays (Maize).